The chain runs to 1077 residues: Disheveled-associated activator of morphogenesis 1 (1077 aa).

Ser-34 is subject to Phosphoserine. The GBD/FH3 domain occupies 45-420 (LPMPPVEELD…QIVIQNDKGQ (376 aa)). Positions 437–526 (RMLVNENEVK…ELNRRAVCAA (90 aa)) form a coiled coil. 2 disordered regions span residues 457–478 (KEHN…AKTQ) and 526–596 (AVPG…PVSL). Residues 528 to 599 (PGGPSPGAPG…PGAPVSLTLK (72 aa)) enclose the FH1 domain. Pro residues-rich tracts occupy residues 530–539 (GPSPGAPGGP) and 549–592 (LPPP…PPGA). In terms of domain architecture, FH2 spans 600–1008 (KKNIPQPTNA…EERRARLEAQ (409 aa)). Positions 693 to 702 (QNCNILLSRL) are actin-binding. A compositionally biased stretch (basic and acidic residues) spans 1007–1026 (AQLKEQRERERKVRKAKESS). Disordered regions lie at residues 1007 to 1033 (AQLK…GEFD) and 1056 to 1077 (RKRI…KLNF). Phosphoserine occurs at positions 1026 and 1029. The DAD domain maps to 1026–1057 (SEESGEFDDLVSALRSGEVFDKDLSKLKRNRK). Residues 1066-1077 (SSRERPITKLNF) show a composition bias toward basic and acidic residues.

The protein belongs to the formin homology family. Interacts with CIP4, FNBP1 and FNBP1L. Interacts with the SH3 domains of Abl, BTK, endophilin, spectrin and SRC. Binds specifically to GTP-bound CDC42 and RHOA. Interacts with INTU; INTU mediates the indirect interaction between DAAM1 and NPHP4. Interacts (via coiled coil domain) with KANK1 (via coiled coil domain). As to expression, in early embryogenesis, expressed in embryonic and extraembryonic ectoderm. In later stages of gastrulation, expressed also in somites and ribs and posterior vertebrae of developing skeletal system. During organogenesis, expressed in CNS, PNS, stomach, liver and limb bud.

It localises to the cytoplasm. The protein resides in the cytoskeleton. Its subcellular location is the cilium basal body. Binds to disheveled (Dvl) and Rho, and mediates Wnt-induced Dvl-Rho complex formation. May play a role as a scaffolding protein to recruit Rho-GDP and Rho-GEF, thereby enhancing Rho-GTP formation. Can direct nucleation and elongation of new actin filaments. Involved in building functional cilia. Involved in the organization of the subapical actin network in multiciliated epithelial cells. Together with DAAM2, required for myocardial maturation and sarcomere assembly. During cell division, may regulate RHOA activation that signals spindle orientation and chromosomal segregation. The sequence is that of Disheveled-associated activator of morphogenesis 1 (Daam1) from Mus musculus (Mouse).